Consider the following 583-residue polypeptide: Threonine--tRNA ligase (583 aa).

Positions 185-478 are catalytic; sequence DHRKLGRELN…LVEHYGGAFP (294 aa). Residues Cys278, His329, and His455 each contribute to the Zn(2+) site.

The protein belongs to the class-II aminoacyl-tRNA synthetase family. In terms of assembly, homodimer. Zn(2+) is required as a cofactor.

It localises to the cytoplasm. The enzyme catalyses tRNA(Thr) + L-threonine + ATP = L-threonyl-tRNA(Thr) + AMP + diphosphate + H(+). Its function is as follows. Catalyzes the attachment of threonine to tRNA(Thr) in a two-step reaction: L-threonine is first activated by ATP to form Thr-AMP and then transferred to the acceptor end of tRNA(Thr). Also edits incorrectly charged L-seryl-tRNA(Thr). The sequence is that of Threonine--tRNA ligase from Borrelia recurrentis (strain A1).